The chain runs to 100 residues: Urease subunit gamma (100 aa).

Belongs to the urease gamma subunit family. As to quaternary structure, heterotrimer of UreA (gamma), UreB (beta) and UreC (alpha) subunits. Three heterotrimers associate to form the active enzyme. The apoenzyme interacts with an accessory complex composed of UreD, UreF and UreG, which is required for the assembly of the nickel containing metallocenter of UreC. The UreE protein may also play a direct role as a metallochaperone in nickel transfer to the urease apoprotein.

Its subcellular location is the cytoplasm. It catalyses the reaction urea + 2 H2O + H(+) = hydrogencarbonate + 2 NH4(+). Its pathway is nitrogen metabolism; urea degradation; CO(2) and NH(3) from urea (urease route): step 1/1. The apoenzyme can be activated in vitro in the presence of nickel ions and carbon dioxide, which promotes carbamylation of 'Lys-217' of the UreC (alpha) subunit. The protein is Urease subunit gamma of Klebsiella aerogenes (Enterobacter aerogenes).